We begin with the raw amino-acid sequence, 333 residues long: Na(+)-translocating ferredoxin:NAD(+) oxidoreductase complex subunit B (333 aa).

The interval 1–27 (MLNAILVPVGILGVFGLIFGIGLAIAA) is hydrophobic. The 4Fe-4S domain maps to 33–92 (YEDPRVPLVRAALPGANCGGCGLPGCDALAANIVGGSAAIDACPVGGASCAAAVAEIMGM). [4Fe-4S] cluster is bound by residues Cys50, Cys53, Cys58, Cys75, Cys138, Cys142, Cys148, Cys152, Cys172, Cys175, Cys178, Cys182, Cys217, Cys220, Cys223, Cys227, Cys246, Cys249, Cys252, Cys256, Cys279, Cys282, Cys285, Cys289, Cys310, Cys313, Cys316, and Cys320. 6 4Fe-4S ferredoxin-type domains span residues 126–162 (REAM…IGED), 163–192 (GLPK…LVPE), 207–237 (KIAR…VENN), 239–266 (AKID…GDVE), 270–299 (STAY…GEIK), and 301–330 (PPYV…MRPN).

It belongs to the 4Fe4S bacterial-type ferredoxin family. RnfB subfamily. In terms of assembly, the complex is composed of six subunits: RnfA, RnfB, RnfC, RnfD, RnfE and RnfG. Requires [4Fe-4S] cluster as cofactor.

The protein localises to the cell membrane. The enzyme catalyses 2 reduced [2Fe-2S]-[ferredoxin] + Na(+)(in) + NAD(+) + H(+) = 2 oxidized [2Fe-2S]-[ferredoxin] + Na(+)(out) + NADH. Its function is as follows. Part of a membrane-bound complex that couples electron transfer with translocation of ions across the membrane. Couples electron transfer from reduced ferredoxin to NAD(+) with electrogenic movement of Na(+) out of the cell. Involved in caffeate respiration. This Acetobacterium woodii (strain ATCC 29683 / DSM 1030 / JCM 2381 / KCTC 1655 / WB1) protein is Na(+)-translocating ferredoxin:NAD(+) oxidoreductase complex subunit B.